A 257-amino-acid polypeptide reads, in one-letter code: Ribonuclease HII (257 aa).

In terms of domain architecture, RNase H type-2 spans 72 to 257; that stretch reads TYIAGIDEVG…FAPIKDMIQK (186 aa). Asp78, Glu79, and Asp170 together coordinate a divalent metal cation.

The protein belongs to the RNase HII family. Mn(2+) serves as cofactor. The cofactor is Mg(2+).

Its subcellular location is the cytoplasm. It catalyses the reaction Endonucleolytic cleavage to 5'-phosphomonoester.. In terms of biological role, endonuclease that specifically degrades the RNA of RNA-DNA hybrids. In Bacillus cereus (strain AH820), this protein is Ribonuclease HII.